Reading from the N-terminus, the 380-residue chain is Erythronate-4-phosphate dehydrogenase (380 aa).

2 residues coordinate substrate: Ser-45 and Thr-66. Residues Asp-146, Thr-174, 205 to 207 (ASR), and Asp-231 each bind NAD(+). Arg-207 is an active-site residue. Residue Glu-236 is part of the active site. His-253 functions as the Proton donor in the catalytic mechanism. Gly-256 provides a ligand contact to NAD(+). A substrate-binding site is contributed by Tyr-257.

It belongs to the D-isomer specific 2-hydroxyacid dehydrogenase family. PdxB subfamily. Homodimer.

Its subcellular location is the cytoplasm. The catalysed reaction is 4-phospho-D-erythronate + NAD(+) = (R)-3-hydroxy-2-oxo-4-phosphooxybutanoate + NADH + H(+). Its pathway is cofactor biosynthesis; pyridoxine 5'-phosphate biosynthesis; pyridoxine 5'-phosphate from D-erythrose 4-phosphate: step 2/5. Catalyzes the oxidation of erythronate-4-phosphate to 3-hydroxy-2-oxo-4-phosphonooxybutanoate. This chain is Erythronate-4-phosphate dehydrogenase, found in Pseudomonas putida (strain GB-1).